A 438-amino-acid polypeptide reads, in one-letter code: MTGIGNREPEHGAGAHVGAAVSVPDAASIPHSPLPIPGARMRAPRIALIAGEASGDILGAGLIDALRRRYPDAEFVGIGGDAMRSAGCQTWFDASELAVMGLTEVLRHLPRLLKLRSAFRERVLAWKPDVFIGIDAPDFNLPVERWLKQRGVRTVHYVSPSVWAWREKRAEKIGVSADLVLCLFPMEPPIYAKHGVDARFVGHPMADAIAYQADREAARAKLGLSTSSTVLAVLPGSRHGEISRLGDTFFQAAWLVSEHLPNLHVLVPAANPGCKQLLAEQLSRSSLPVMRSHLLDGQARTAMLAADVVLLASGTATLEAMLVKRPMVVGYKVAPLTYRIVKTLGLLKVNRYALPNILANEDLAPELMQDDCTPERLCEALLDWFKHPEKVAGLQSRYLALHAQLRQDASARAAEAVAELLTQRELGIGNRESGGAGS.

Belongs to the LpxB family.

It catalyses the reaction a lipid X + a UDP-2-N,3-O-bis[(3R)-3-hydroxyacyl]-alpha-D-glucosamine = a lipid A disaccharide + UDP + H(+). The protein operates within bacterial outer membrane biogenesis; LPS lipid A biosynthesis. Its function is as follows. Condensation of UDP-2,3-diacylglucosamine and 2,3-diacylglucosamine-1-phosphate to form lipid A disaccharide, a precursor of lipid A, a phosphorylated glycolipid that anchors the lipopolysaccharide to the outer membrane of the cell. In Xanthomonas campestris pv. campestris (strain 8004), this protein is Lipid-A-disaccharide synthase.